A 234-amino-acid chain; its full sequence is Interleukin-27 subunit alpha (234 aa).

The N-terminal stretch at 1-28 is a signal peptide; the sequence is MGQVTGDLGWRLSLLLLPLLLVQAGSWG. A glycan (N-linked (GlcNAc...) asparagine) is linked at Asn-85. A disordered region spans residues 160–185; that stretch reads KEEEDKEEEEEEEEEEKKLPLGALGG. A compositionally biased stretch (acidic residues) spans 161 to 174; it reads EEEDKEEEEEEEEE.

Belongs to the IL-6 superfamily. As to quaternary structure, heterodimer with EBI3; not disulfide-linked. This heterodimer is known as interleukin IL-27. Post-translationally, O-glycosylated. As to expression, expressed in macrophages and dendritic cells.

The protein localises to the secreted. In terms of biological role, associates with EBI3 to form the IL-27 interleukin, a heterodimeric cytokine which functions in innate immunity. IL-27 has pro- and anti-inflammatory properties, that can regulate T-helper cell development, suppress T-cell proliferation, stimulate cytotoxic T-cell activity, induce isotype switching in B-cells, and that has diverse effects on innate immune cells. Among its target cells are CD4 T-helper cells which can differentiate in type 1 effector cells (TH1), type 2 effector cells (TH2) and IL17 producing helper T-cells (TH17). It drives rapid clonal expansion of naive but not memory CD4 T-cells. It also strongly synergizes with IL-12 to trigger interferon-gamma/IFN-gamma production of naive CD4 T-cells, binds to the cytokine receptor WSX-1/TCCR which appears to be required but not sufficient for IL-27-mediated signal transduction. IL-27 potentiate the early phase of TH1 response and suppress TH2 and TH17 differentiation. It induces the differentiation of TH1 cells via two distinct pathways, p38 MAPK/TBX21- and ICAM1/ITGAL/ERK-dependent pathways. It also induces STAT1, STAT3, STAT4 and STAT5 phosphorylation and activates TBX21/T-Bet via STAT1 with resulting IL12RB2 up-regulation, an event crucial to TH1 cell commitment. It suppresses the expression of GATA3, the inhibitor TH1 cells development. In CD8 T-cells, it activates STATs as well as GZMB. IL-27 reveals to be a potent inhibitor of TH17 cell development and of IL-17 production. Indeed IL27 alone is also able to inhibit the production of IL17 by CD4 and CD8 T-cells. While IL-27 suppressed the development of pro-inflammatory Th17 cells via STAT1, it inhibits the development of anti-inflammatory inducible regulatory T-cells, iTreg, independently of STAT1. IL-27 also has an effect on cytokine production, it suppresses pro-inflammatory cytokine production such as IL2, IL4, IL5 and IL6 and activates suppressors of cytokine signaling such as SOCS1 and SOCS3. Apart from suppression of cytokine production, IL-27 also antagonizes the effects of some cytokines such as IL6 through direct effects on T-cells. Another important role of IL-27 is its antitumor activity as well as its antiangiogenic activity with activation of production of antiangiogenic chemokines such as IP-10/CXCL10 and MIG/CXCL9. The chain is Interleukin-27 subunit alpha (Il27) from Mus musculus (Mouse).